Here is a 111-residue protein sequence, read N- to C-terminus: P antigen family member 2 (111 aa).

A disordered region spans residues 1–66; the sequence is MSELLRARSQ…NQAVPAFQGP (66 aa). Residues 8–24 are compositionally biased toward polar residues; it reads RSQSSERGNDQESSQPV.

It belongs to the GAGE family.

The sequence is that of P antigen family member 2 (PAGE2) from Homo sapiens (Human).